A 216-amino-acid chain; its full sequence is MATRITNQKLSKSSRAWMREHLDDPFVKKAQKEGYRARAAYKLLEIQEKYKLIKPGMTVVDLGAAPGSWSQIAGKLVGSKGLVIASDILPMDALPDVTFLQGDFREEAVFEKLLNILNGRQVDIVISDMAPNTSGNRAVDQPRQIYLCELALDFAQKVLGPNGQFVVKVFQGAGFDEFRKQVVDSFDVLKTAKPAASRARSKEVFLVGQGRKKALQ.

Positions 67, 69, 87, 103, and 128 each coordinate S-adenosyl-L-methionine. Lysine 168 functions as the Proton acceptor in the catalytic mechanism.

This sequence belongs to the class I-like SAM-binding methyltransferase superfamily. RNA methyltransferase RlmE family.

The protein localises to the cytoplasm. The enzyme catalyses uridine(2552) in 23S rRNA + S-adenosyl-L-methionine = 2'-O-methyluridine(2552) in 23S rRNA + S-adenosyl-L-homocysteine + H(+). Functionally, specifically methylates the uridine in position 2552 of 23S rRNA at the 2'-O position of the ribose in the fully assembled 50S ribosomal subunit. In Acinetobacter baumannii (strain AB307-0294), this protein is Ribosomal RNA large subunit methyltransferase E.